The sequence spans 94 residues: Pyrimidine/purine nucleoside phosphorylase 2 (94 aa).

It belongs to the nucleoside phosphorylase PpnP family.

It carries out the reaction a purine D-ribonucleoside + phosphate = a purine nucleobase + alpha-D-ribose 1-phosphate. It catalyses the reaction adenosine + phosphate = alpha-D-ribose 1-phosphate + adenine. The catalysed reaction is cytidine + phosphate = cytosine + alpha-D-ribose 1-phosphate. The enzyme catalyses guanosine + phosphate = alpha-D-ribose 1-phosphate + guanine. It carries out the reaction inosine + phosphate = alpha-D-ribose 1-phosphate + hypoxanthine. It catalyses the reaction thymidine + phosphate = 2-deoxy-alpha-D-ribose 1-phosphate + thymine. The catalysed reaction is uridine + phosphate = alpha-D-ribose 1-phosphate + uracil. The enzyme catalyses xanthosine + phosphate = alpha-D-ribose 1-phosphate + xanthine. Its function is as follows. Catalyzes the phosphorolysis of diverse nucleosides, yielding D-ribose 1-phosphate and the respective free bases. Can use uridine, adenosine, guanosine, cytidine, thymidine, inosine and xanthosine as substrates. Also catalyzes the reverse reactions. The sequence is that of Pyrimidine/purine nucleoside phosphorylase 2 from Psychrobacter cryohalolentis (strain ATCC BAA-1226 / DSM 17306 / VKM B-2378 / K5).